Consider the following 332-residue polypeptide: tRNA U34 carboxymethyltransferase (332 aa).

Residues Lys-91, Trp-105, Lys-110, Gly-130, 152 to 154 (DPS), 181 to 182 (IE), Met-196, Tyr-200, and Arg-315 contribute to the carboxy-S-adenosyl-L-methionine site.

The protein belongs to the class I-like SAM-binding methyltransferase superfamily. CmoB family. In terms of assembly, homotetramer.

It carries out the reaction carboxy-S-adenosyl-L-methionine + 5-hydroxyuridine(34) in tRNA = 5-carboxymethoxyuridine(34) in tRNA + S-adenosyl-L-homocysteine + H(+). In terms of biological role, catalyzes carboxymethyl transfer from carboxy-S-adenosyl-L-methionine (Cx-SAM) to 5-hydroxyuridine (ho5U) to form 5-carboxymethoxyuridine (cmo5U) at position 34 in tRNAs. This Shewanella sp. (strain W3-18-1) protein is tRNA U34 carboxymethyltransferase.